A 484-amino-acid polypeptide reads, in one-letter code: tRNA-2-methylthio-N(6)-dimethylallyladenosine synthase (484 aa).

One can recognise an MTTase N-terminal domain in the interval 36–153; it reads GKLYIKTHGC…LPELIRARRE (118 aa). The [4Fe-4S] cluster site is built by Cys45, Cys82, Cys116, Cys190, Cys194, and Cys197. Residues 176–415 form the Radical SAM core domain; it reads RAEGPSAFVS…HINAHAASIS (240 aa). A TRAM domain is found at 416-479; sequence QSMVGSVQRV…SNSLRGRIQL (64 aa). Residues 428–450 form a disordered region; that stretch reads EGPSRRDPNELTGKSENMRPVNF.

Belongs to the methylthiotransferase family. MiaB subfamily. As to quaternary structure, monomer. [4Fe-4S] cluster is required as a cofactor.

Its subcellular location is the cytoplasm. The enzyme catalyses N(6)-dimethylallyladenosine(37) in tRNA + (sulfur carrier)-SH + AH2 + 2 S-adenosyl-L-methionine = 2-methylsulfanyl-N(6)-dimethylallyladenosine(37) in tRNA + (sulfur carrier)-H + 5'-deoxyadenosine + L-methionine + A + S-adenosyl-L-homocysteine + 2 H(+). Functionally, catalyzes the methylthiolation of N6-(dimethylallyl)adenosine (i(6)A), leading to the formation of 2-methylthio-N6-(dimethylallyl)adenosine (ms(2)i(6)A) at position 37 in tRNAs that read codons beginning with uridine. This is tRNA-2-methylthio-N(6)-dimethylallyladenosine synthase from Xanthomonas axonopodis pv. citri (strain 306).